Reading from the N-terminus, the 193-residue chain is Erythropoietin (193 aa).

The N-terminal stretch at 1 to 27 is a signal peptide; it reads MGVHECPAWLWLLLSLLSLPLGLPVLG. 2 cysteine pairs are disulfide-bonded: Cys34-Cys188 and Cys56-Cys60. Asn51 is a glycosylation site (N-linked (GlcNAc...) asparagine). Asn65 and Asn110 each carry an N-linked (GlcNAc...) asparagine glycan. An O-linked (GalNAc...) serine glycan is attached at Ser153.

Belongs to the EPO/TPO family. As to expression, produced by kidney or liver of adult mammals and by liver of fetal or neonatal mammals.

It is found in the secreted. Hormone involved in the regulation of erythrocyte proliferation and differentiation and the maintenance of a physiological level of circulating erythrocyte mass. Binds to EPOR leading to EPOR dimerization and JAK2 activation thereby activating specific downstream effectors, including STAT1 and STAT3. The protein is Erythropoietin (EPO) of Homo sapiens (Human).